Consider the following 366-residue polypeptide: Flagellar P-ring protein (366 aa).

The N-terminal stretch at 1 to 23 (MRTLKIFALAVSLLSMLAAPVQA) is a signal peptide.

The protein belongs to the FlgI family. As to quaternary structure, the basal body constitutes a major portion of the flagellar organelle and consists of four rings (L,P,S, and M) mounted on a central rod.

It localises to the periplasm. The protein localises to the bacterial flagellum basal body. In terms of biological role, assembles around the rod to form the L-ring and probably protects the motor/basal body from shearing forces during rotation. The protein is Flagellar P-ring protein of Idiomarina loihiensis (strain ATCC BAA-735 / DSM 15497 / L2-TR).